A 389-amino-acid polypeptide reads, in one-letter code: Ribonucleoside-diphosphate reductase subunit M2 (389 aa).

Position 20 is a phosphoserine (serine 20). Position 33 is a phosphothreonine (threonine 33). A Cy motif is present at residues 49–51 (RRI). Residues aspartate 138, glutamate 169, and histidine 172 each contribute to the Fe cation site. Tyrosine 176 is an active-site residue. The Fe cation site is built by glutamate 232, glutamate 266, and histidine 269.

It belongs to the ribonucleoside diphosphate reductase small chain family. As to quaternary structure, heterodimer of a large and a small subunit. Interacts (via Cy motif and when phosphorylated at Thr-33) with CCNF; the interaction occurs exclusively in G2 and early M. Fe cation serves as cofactor. In terms of processing, phosphorylation on Ser-20 relieves the inhibitory effect on Wnt signaling. Phosphorylated on Thr-33 by CDK1 and CDK2; predominantly in G2 and M phase. Post-translationally, ubiquitinated by the SCF(CCNF) E3 ubiquitin-protein ligase complex; leading to its degradation by the proteasome.

It localises to the cytoplasm. The protein localises to the nucleus. The catalysed reaction is a 2'-deoxyribonucleoside 5'-diphosphate + [thioredoxin]-disulfide + H2O = a ribonucleoside 5'-diphosphate + [thioredoxin]-dithiol. Its function is as follows. Provides the precursors necessary for DNA synthesis. Catalyzes the biosynthesis of deoxyribonucleotides from the corresponding ribonucleotides. Inhibits Wnt signaling. In Homo sapiens (Human), this protein is Ribonucleoside-diphosphate reductase subunit M2 (RRM2).